Reading from the N-terminus, the 562-residue chain is MOB kinase activator-like 2 (562 aa).

Positions 30-50 (KSGSVQGTTATATATGPPSPP) are disordered. The segment covering 31 to 45 (SGSVQGTTATATATG) has biased composition (low complexity). Residues cysteine 170, cysteine 175, histidine 250, and histidine 255 each coordinate Zn(2+). Disordered stretches follow at residues 304–378 (DDTS…TASA), 468–523 (NFSN…STTV), and 538–562 (GASAGGGGNAVSAATGGATSASSTA). Low complexity-rich tracts occupy residues 305–349 (DTSG…NSTS), 357–378 (NSQSNSNSHSNSSNSHTTTASA), and 471–481 (NNNNNNHNLNH). Residues 482-514 (LNHHHHHHHHQHHHQHHPHGHHGHQGHQGHQGH) are compositionally biased toward basic residues. Positions 547–562 (AVSAATGGATSASSTA) are enriched in low complexity.

This sequence belongs to the MOB1/phocein family. Interacts with and activates trc, also interacts with wts.

It is found in the cytoplasm. The protein localises to the nucleus. Functionally, required for the normal morphogenesis of a variety of polarized outgrowths including epidermal hairs, bristles, arista laterals, and dendrites. In Drosophila pseudoobscura pseudoobscura (Fruit fly), this protein is MOB kinase activator-like 2.